The chain runs to 759 residues: Phosphoribosylformylglycinamidine synthase subunit PurL (759 aa).

The active site involves His48. Residues Tyr51 and Lys91 each contribute to the ATP site. Residue Glu93 coordinates Mg(2+). Residues 94–97 and Arg116 contribute to the substrate site; that span reads SHNH. His95 acts as the Proton acceptor in catalysis. Asp117 lines the Mg(2+) pocket. Gln240 provides a ligand contact to substrate. A Mg(2+)-binding site is contributed by Asp268. Residue 317–319 coordinates substrate; sequence ESQ. ATP is bound by residues Asn501 and Gly538. Asn539 lines the Mg(2+) pocket. Ser541 is a substrate binding site.

Belongs to the FGAMS family. As to quaternary structure, monomer. Part of the FGAM synthase complex composed of 1 PurL, 1 PurQ and 2 PurS subunits.

The protein resides in the cytoplasm. It catalyses the reaction N(2)-formyl-N(1)-(5-phospho-beta-D-ribosyl)glycinamide + L-glutamine + ATP + H2O = 2-formamido-N(1)-(5-O-phospho-beta-D-ribosyl)acetamidine + L-glutamate + ADP + phosphate + H(+). The protein operates within purine metabolism; IMP biosynthesis via de novo pathway; 5-amino-1-(5-phospho-D-ribosyl)imidazole from N(2)-formyl-N(1)-(5-phospho-D-ribosyl)glycinamide: step 1/2. In terms of biological role, part of the phosphoribosylformylglycinamidine synthase complex involved in the purines biosynthetic pathway. Catalyzes the ATP-dependent conversion of formylglycinamide ribonucleotide (FGAR) and glutamine to yield formylglycinamidine ribonucleotide (FGAM) and glutamate. The FGAM synthase complex is composed of three subunits. PurQ produces an ammonia molecule by converting glutamine to glutamate. PurL transfers the ammonia molecule to FGAR to form FGAM in an ATP-dependent manner. PurS interacts with PurQ and PurL and is thought to assist in the transfer of the ammonia molecule from PurQ to PurL. In Chlorobaculum tepidum (strain ATCC 49652 / DSM 12025 / NBRC 103806 / TLS) (Chlorobium tepidum), this protein is Phosphoribosylformylglycinamidine synthase subunit PurL.